Here is a 296-residue protein sequence, read N- to C-terminus: MQSLLLPPASSSGVSAVALRPGFQHSFNHQSLSTRSLPLFNPLLLAPKKKTTISSYQSPPSLSVYGFQIGGSKPSFTPSTVAFSYPTSPSSVPGDNEVDKAKLAQVAKRLEKTSRYFKRLGSIGFWGQLVSTVVAAVILSFSIVVTGKPTSPATFYATASGIAAAFVSVFWSFGYIRLSERLRRTSIDPAKAPPRADVVKGLRSGIMVNILGMGSALLGMQATVGFLVAKALTTSANPFYQGVSQGYSPVLALDVFLVQASANTLLSHFLGLVCSLELLRSVTVPNSESVVVPKVA.

The N-terminal 90 residues, 1–90 (MQSLLLPPAS…VAFSYPTSPS (90 aa)), are a transit peptide targeting the chloroplast. The next 4 membrane-spanning stretches (helical) occupy residues 125 to 145 (FWGQ…SIVV), 156 to 176 (YATA…FGYI), 208 to 228 (VNIL…GFLV), and 250 to 270 (VLAL…SHFL).

Homomultimer. Part of the translocon complex. In terms of tissue distribution, ubiquitous. Highest expression in green tissues and very low levels in mature pollen.

The protein resides in the plastid. It is found in the chloroplast inner membrane. Its function is as follows. Involved in chloroplast protein import across the inner envelope membrane. Also acts as a chloroplast permease regulating the iron transport and homeostasis. Involved in the uptake and sequestration of iron in plastids. This Arabidopsis thaliana (Mouse-ear cress) protein is Protein TIC 21, chloroplastic (TIC21).